We begin with the raw amino-acid sequence, 356 residues long: MAPMGIRLSPLGVAVFFLLGLGVLYHLYSGFLAGRFSLFGLGSEPAAGEAEVASDGGTVDLREMLAVAVLAAERGGDEVRRVRESNVLHEKSKGKTREGADDKMTSGDVLSNRKMFYLLKTAFPNVQINTEEHVDASDKEVIVWNRKIPEDILKEIAAPKEVPAESVTVWIDPLDATQEYTEDLRKYVTTMVCVAVNGKPVLGVIHKPFSEYTAWAMVDGGSNVKARSSYNEKTPKIIVSRSHAGMVKQVALQTFGNQTSIIPAGGAGYKVLALLDVPDMTQEKADLYIHVTYIKKWDICAGNAILKALGGHMTTLNGEEISYTGSDGIEGGLLASIRMNHQALVRKLPDLEKSGH.

M1 is subject to N-acetylmethionine. At 1–12 the chain is on the cytoplasmic side; it reads MAPMGIRLSPLG. A helical membrane pass occupies residues 13 to 33; that stretch reads VAVFFLLGLGVLYHLYSGFLA. The Lumenal segment spans residues 34-356; it reads GRFSLFGLGS…KLPDLEKSGH (323 aa). Residues 84-104 form a disordered region; that stretch reads ESNVLHEKSKGKTREGADDKM. The Proton acceptor role is filled by D108. 4 residues coordinate Mg(2+): E131, D172, L174, and D175. Residue T177 is the Proton acceptor of the active site. Residues S240 and H243 each coordinate AMP. An N-linked (GlcNAc...) asparagine glycan is attached at N257. AMP-binding residues include G266 and K270. D298 is a Mg(2+) binding site.

The protein belongs to the inositol monophosphatase superfamily. The cofactor is Mg(2+). In terms of processing, N-glycosylated. Contains N-linked glycan resistant to endoglycosydase H.

It localises to the golgi apparatus. The protein localises to the trans-Golgi network membrane. The enzyme catalyses adenosine 3',5'-bisphosphate + H2O = AMP + phosphate. The protein operates within sulfur metabolism. Its activity is regulated as follows. Strongly inhibited by lithium. Its function is as follows. Exhibits 3'-nucleotidase activity toward adenosine 3',5'-bisphosphate (PAP), namely hydrolyzes adenosine 3',5'-bisphosphate into adenosine 5'-monophosphate (AMP) and a phosphate. May play a role in the formation of skeletal elements derived through endochondral ossification, possibly by clearing adenosine 3',5'-bisphosphate produced by Golgi sulfotransferases during glycosaminoglycan sulfation. Has no activity toward 3'-phosphoadenosine 5'-phosphosulfate (PAPS) or inositol phosphate (IP) substrates including I(1)P, I(1,4)P2, I(1,3,4)P3, I(1,4,5)P3 and I(1,3,4,5)P4. The sequence is that of Golgi-resident adenosine 3',5'-bisphosphate 3'-phosphatase from Mus musculus (Mouse).